A 626-amino-acid polypeptide reads, in one-letter code: MSETVERHEFGAEVGRLLDLVVHALYSDREIFLRELVANAADATDRRRFEALTNEALALPSDARVLIAPDKAARTLTISDSGIGMSKEDLAQNLGTIARSGTRAFSQALGEAKGSEGEDLRPSLIGQFGVGFYSAFMVADRVTVTSRRAGGEEAWTWASDGKGSYTLEPASREQAGTDIVLHLKEDADEYLESYRLDHVVRKWADNIAVPIAIRDAEGKEEAANRGTALWRKPKSEITEEQYKEFYRTVSHGFDEPWATLHWRAEGALEFTGLLFVPSMKPFMPVEDDRRSKVRLHVRRMFITDEAELLPNWLRFVHGVVDTDDLPLNVSREMLQSTPTLQKIRRAVTTRVINELSNRSKNTEKADDYQKFFENFGSVLKEGIYEDFERRAEIAPLLRFRSSTEGGWTSLPDYVSRMKPEQEAIYYLVADDVEALKNSAQLEGFRARGVEVLLLSDHVDAFWPEQLGKFEDKPLRSVTQGSADLAKLKPEGEAAEDAPALDRLVAALKLALEPDVSDVRVTDRLVDSAVVLAASGMGPDLQMQRLLRRAGRGFGGSAPILEINPRHALIRSLNDRAEAGEDLKAEAGTLLDLARVQDGDTPRDPVAFARAVAAALAGTVAKPAESA.

The interval 1-331 (MSETVERHEF…TDDLPLNVSR (331 aa)) is a; substrate-binding. Positions 332–544 (EMLQSTPTLQ…GMGPDLQMQR (213 aa)) are b. Positions 545–626 (LLRRAGRGFG…GTVAKPAESA (82 aa)) are c.

It belongs to the heat shock protein 90 family. As to quaternary structure, homodimer.

It is found in the cytoplasm. Molecular chaperone. Has ATPase activity. The protein is Chaperone protein HtpG of Methylorubrum populi (strain ATCC BAA-705 / NCIMB 13946 / BJ001) (Methylobacterium populi).